The sequence spans 27 residues: Secretin (27 aa).

Met-27 bears the Methionine amide mark.

It belongs to the glucagon family.

Its subcellular location is the secreted. In terms of biological role, hormone involved in different processes, such as regulation of the pH of the duodenal content, food intake and water homeostasis. Exerts its biological effects by binding to secretin receptor (SCTR), a G-protein coupled receptor expressed in the basolateral domain of several cells. This Gallus gallus (Chicken) protein is Secretin.